We begin with the raw amino-acid sequence, 287 residues long: Formamidopyrimidine-DNA glycosylase (287 aa).

Proline 2 acts as the Schiff-base intermediate with DNA in catalysis. Residue glutamate 3 is the Proton donor of the active site. Residue lysine 58 is the Proton donor; for beta-elimination activity of the active site. 3 residues coordinate DNA: histidine 104, arginine 123, and arginine 166. The segment at 251 to 287 (RTYDREGQPCRNDGCRGVIGREVQAGRSTFYCPVCQR) adopts an FPG-type zinc-finger fold. Arginine 277 serves as the catalytic Proton donor; for delta-elimination activity.

This sequence belongs to the FPG family. Monomer. Zn(2+) is required as a cofactor.

It carries out the reaction Hydrolysis of DNA containing ring-opened 7-methylguanine residues, releasing 2,6-diamino-4-hydroxy-5-(N-methyl)formamidopyrimidine.. The enzyme catalyses 2'-deoxyribonucleotide-(2'-deoxyribose 5'-phosphate)-2'-deoxyribonucleotide-DNA = a 3'-end 2'-deoxyribonucleotide-(2,3-dehydro-2,3-deoxyribose 5'-phosphate)-DNA + a 5'-end 5'-phospho-2'-deoxyribonucleoside-DNA + H(+). Its function is as follows. Involved in base excision repair of DNA damaged by oxidation or by mutagenic agents. Acts as a DNA glycosylase that recognizes and removes damaged bases. Has a preference for oxidized purines, such as 7,8-dihydro-8-oxoguanine (8-oxoG). Has AP (apurinic/apyrimidinic) lyase activity and introduces nicks in the DNA strand. Cleaves the DNA backbone by beta-delta elimination to generate a single-strand break at the site of the removed base with both 3'- and 5'-phosphates. This is Formamidopyrimidine-DNA glycosylase from Phenylobacterium zucineum (strain HLK1).